A 227-amino-acid polypeptide reads, in one-letter code: Translation initiation factor 6 (227 aa).

The protein belongs to the eIF-6 family.

Its function is as follows. Binds to the 50S ribosomal subunit and prevents its association with the 30S ribosomal subunit to form the 70S initiation complex. The chain is Translation initiation factor 6 from Methanococcus vannielii (strain ATCC 35089 / DSM 1224 / JCM 13029 / OCM 148 / SB).